We begin with the raw amino-acid sequence, 86 residues long: MQDELFETEKAPQKNTKNAKNAPKKSFEEHAHSLEQAIDRLNDSNLSLKDGMDLYKTAMQELFLAQKLLENAYLEYEKLQTPDKKA.

Residues 1-26 form a disordered region; that stretch reads MQDELFETEKAPQKNTKNAKNAPKKS.

This sequence belongs to the XseB family. As to quaternary structure, heterooligomer composed of large and small subunits.

It is found in the cytoplasm. It carries out the reaction Exonucleolytic cleavage in either 5'- to 3'- or 3'- to 5'-direction to yield nucleoside 5'-phosphates.. Its function is as follows. Bidirectionally degrades single-stranded DNA into large acid-insoluble oligonucleotides, which are then degraded further into small acid-soluble oligonucleotides. The sequence is that of Exodeoxyribonuclease 7 small subunit from Helicobacter pylori (strain Shi470).